We begin with the raw amino-acid sequence, 476 residues long: Ribulose bisphosphate carboxylase large chain (476 aa).

The substrate site is built by N116 and T166. The Proton acceptor role is filled by K168. K170 contributes to the substrate binding site. K194, D196, and E197 together coordinate Mg(2+). K194 is subject to N6-carboxylysine. The active-site Proton acceptor is H286. R287, H319, and S371 together coordinate substrate.

It belongs to the RuBisCO large chain family. Type I subfamily. Heterohexadecamer of 8 large chains and 8 small chains. Mg(2+) is required as a cofactor.

It carries out the reaction 2 (2R)-3-phosphoglycerate + 2 H(+) = D-ribulose 1,5-bisphosphate + CO2 + H2O. It catalyses the reaction D-ribulose 1,5-bisphosphate + O2 = 2-phosphoglycolate + (2R)-3-phosphoglycerate + 2 H(+). Its function is as follows. RuBisCO catalyzes two reactions: the carboxylation of D-ribulose 1,5-bisphosphate, the primary event in carbon dioxide fixation, as well as the oxidative fragmentation of the pentose substrate. Both reactions occur simultaneously and in competition at the same active site. The sequence is that of Ribulose bisphosphate carboxylase large chain from Pseudonocardia dioxanivorans (strain ATCC 55486 / DSM 44775 / JCM 13855 / CB1190).